A 283-amino-acid chain; its full sequence is Shikimate dehydrogenase (NADP(+)) (283 aa).

Shikimate is bound by residues 18-20 (SYS) and T66. The active-site Proton acceptor is the K70. Positions 91 and 106 each coordinate shikimate. NADP(+) contacts are provided by residues 130-134 (GAGGA) and M225. Y227 provides a ligand contact to shikimate. G248 is a binding site for NADP(+).

This sequence belongs to the shikimate dehydrogenase family. In terms of assembly, homodimer.

The enzyme catalyses shikimate + NADP(+) = 3-dehydroshikimate + NADPH + H(+). It participates in metabolic intermediate biosynthesis; chorismate biosynthesis; chorismate from D-erythrose 4-phosphate and phosphoenolpyruvate: step 4/7. Its function is as follows. Involved in the biosynthesis of the chorismate, which leads to the biosynthesis of aromatic amino acids. Catalyzes the reversible NADPH linked reduction of 3-dehydroshikimate (DHSA) to yield shikimate (SA). In Pelodictyon phaeoclathratiforme (strain DSM 5477 / BU-1), this protein is Shikimate dehydrogenase (NADP(+)).